The primary structure comprises 485 residues: Outer membrane protein OprM (485 aa).

Residues 1–17 (MKRSFLSLAVAAVVLSG) form the signal peptide. Cys18 is lipidated: N-palmitoyl cysteine. The S-diacylglycerol cysteine moiety is linked to residue Cys18.

The protein belongs to the outer membrane factor (OMF) (TC 1.B.17) family. In terms of assembly, component of the MexAB-OprM multidrug efflux complex, composed of six MexA subunits forming a hexameric tube, binding to a MexB trimer, which interact with the trimeric OprM outer membrane channel protein. The OprM homotrimer forms a 135 Angstroms-long pore. It consists of a beta-barrel, which is probably inserted in the outer membrane, and an alpha-barrel formed by alpha-helices which probably spans the periplasm. In the ground state the periplasmic end is closed, while the outer membrane end opening is 6-8 Angstroms in diameter. OprM does not directly contact MexB; instead, MexA joins MexB and OprM by forming a funnel-like hexamer anchored to the inner membrane. MexA may initially form a hexameric ring complex with MexB prior to OprM, then OprM undergoes a conformational change as it contacts MexA, allowing the periplasmic gate to open. It is thought that, under high intracellular substrate concentration, MexB ejects substrate into the tunnel formed by MexA-OprM; as the substrate level declines, conformational changes in MexB cause efflux to reduce and stop and the complex shifts to the closed state. MexB subunit acts as a substrate:proton antiporter and activity is enhanced significantly when in complex with MexA and OprM, in vitro.

It is found in the cell outer membrane. Its activity is regulated as follows. Export of antibiotics and solvents is dramatically decreased in the presence of the protonophore carbonyl cyanide m-chlorophenylhydrazone (CCCP), therefore may be driven by a proton gradient. Antibiotic efflux is inhibited by pyridopyrimidine derivatives, such as ABI-PP, acting by binding to a hydrophobic pocket in MexB. Its function is as follows. The outer membrane component of the MexAB-OprM efflux system that confers multidrug resistance. Functions as the major efflux pump for n-hexane and p-xylene efflux. Has been shown in one study to be involved in the active efflux of the autoinducer N-(3-oxododecanoyl) homoserine lactone, thereby playing an indirect role in quorum-sensing; but has been shown in another study not to be involved in efflux of this autoinducer. Over-expression of the pump increases antibiotic and solvent efflux capacities. Can replace the OprJ outer membrane component of the MexCD-OprJ pump; the antibiotics exported are those exported by the intact MexCD pump, showing that efflux substrate specificity is not conferred by this component. Serves as the outer membrane component for the MexXY efflux system. Implicated in the secretion of the siderophore pyoverdine. OprM is probably involved in the efflux of the siderophore across the outer membrane. This Pseudomonas aeruginosa (strain ATCC 15692 / DSM 22644 / CIP 104116 / JCM 14847 / LMG 12228 / 1C / PRS 101 / PAO1) protein is Outer membrane protein OprM (oprM).